We begin with the raw amino-acid sequence, 575 residues long: Cytochrome P450 monooxygenase opaB (575 aa).

N-linked (GlcNAc...) asparagine glycosylation is present at asparagine 6. A helical transmembrane segment spans residues 37-57 (FILAAILASIILLIIRNSMLS). Residues asparagine 83 and asparagine 242 are each glycosylated (N-linked (GlcNAc...) asparagine). A heme-binding site is contributed by cysteine 521.

The protein belongs to the cytochrome P450 family. Heme serves as cofactor.

It is found in the membrane. It participates in secondary metabolite biosynthesis. Its function is as follows. Cytochrome P450 monooxygenase; part of the gene cluster that mediates the biosynthesis of oxepinamides, derivatives of anthranilyl-containing tripeptides that share an oxepin ring and a fused pyrimidinone moiety. The nonribosomal peptide synthetase (NRPS) opaA assembles the quinazolinone core with D-Phe incorporation. The first adenylation domain (A1) of opaA loads and activates anthranilic acid whereas the second A domain (A2) is for activating of L-Phe, which is then converted to D-form by the E domain. The third A domain (A3) is responsible for L-Ile activation and the terminal condensation domain C3 for cyclization and releasing the NRPS product protuboxepin K. The cytochrome P450 monooxygenase opaB then catalyzes alone the oxepin ring formation to convert protuboxepin K into protuboxepin A. The flavoenzyme opaC installs subsequently one hydroxyl group at the oxepin ring, accompanied by double bond migration, to form 15-epi-oxepinamide E. The epimerase opaE changes the D-Phe residue back to L-form, leading to oxepinamide E, which is further methylated at the hydroxyl group at C-12 by the O-methyltransferase OpaF to yield oxepinamide F. The chain is Cytochrome P450 monooxygenase opaB from Aspergillus ustus.